Here is an 837-residue protein sequence, read N- to C-terminus: Periplasmic nitrate reductase (837 aa).

Positions 1 to 31 (MKLNRRDFIKANAAAAAISAAGLSVPGAAVA) form a signal peptide, tat-type signal. One can recognise a 4Fe-4S Mo/W bis-MGD-type domain in the interval 37-93 (IRWDKAACRFCGTGCGVLVGTQDGRVVATQGDPDAPVNRGLNCIKGYFLSKIMYGAD). The [4Fe-4S] cluster site is built by cysteine 44, cysteine 47, cysteine 51, and cysteine 79. Residues lysine 81, glutamine 148, asparagine 173, cysteine 177, 210 to 217 (WGSNMAEM), 241 to 245 (STFEH), and 260 to 262 (QTD) contribute to the Mo-bis(molybdopterin guanine dinucleotide) site. Residues 308–329 (EKNATSNGYPDADGKPKGDTGK) form a disordered region. Over residues 319–329 (ADGKPKGDTGK) the composition is skewed to basic and acidic residues. Mo-bis(molybdopterin guanine dinucleotide) contacts are provided by residues methionine 381, glutamine 385, asparagine 491, 517–518 (SD), lysine 540, aspartate 567, and 727–736 (TGRVLEHWHT). Residue phenylalanine 803 coordinates substrate. Positions 811 and 828 each coordinate Mo-bis(molybdopterin guanine dinucleotide).

The protein belongs to the prokaryotic molybdopterin-containing oxidoreductase family. NasA/NapA/NarB subfamily. In terms of assembly, component of the periplasmic nitrate reductase NapAB complex composed of NapA and NapB. [4Fe-4S] cluster is required as a cofactor. It depends on Mo-bis(molybdopterin guanine dinucleotide) as a cofactor. Post-translationally, predicted to be exported by the Tat system. The position of the signal peptide cleavage has not been experimentally proven.

It is found in the periplasm. The catalysed reaction is 2 Fe(II)-[cytochrome] + nitrate + 2 H(+) = 2 Fe(III)-[cytochrome] + nitrite + H2O. Its function is as follows. Catalytic subunit of the periplasmic nitrate reductase complex NapAB. Receives electrons from NapB and catalyzes the reduction of nitrate to nitrite. The polypeptide is Periplasmic nitrate reductase (Dechloromonas aromatica (strain RCB)).